The primary structure comprises 387 residues: Paralemmin-1 (387 aa).

Methionine 1 bears the N-acetylmethionine mark. Positions 9 to 101 (TSQQERLQAI…EKEIEVLERG (93 aa)) form a coiled coil. Basic and acidic residues-rich tracts occupy residues 31–41 (KRRQLEDERRQ) and 69–102 (DLRR…ERGD). Residues 31–160 (KRRQLEDERR…VSNTPLRTVD (130 aa)) are disordered. The span at 104-117 (APATAKENAAAPSP) shows a compositional bias: low complexity. A phosphoserine mark is found at serine 116 and serine 124. 2 positions are modified to phosphothreonine: threonine 141 and threonine 145. Serine 162 bears the Phosphoserine mark. Threonine 243 is modified (phosphothreonine). Serine 245 carries the post-translational modification Phosphoserine. Disordered regions lie at residues 247–296 (AGST…GQEP) and 335–378 (AEPK…DMKK). Residues 286-296 (GPPGIQPGQEP) show a composition bias toward low complexity. Serine 346 carries the phosphoserine modification. Threonine 367 carries the post-translational modification Phosphothreonine. At serine 369 the chain carries Phosphoserine. S-palmitoyl cysteine attachment occurs at residues cysteine 381 and cysteine 383. Cysteine 384 is modified (cysteine methyl ester). Cysteine 384 carries the S-farnesyl cysteine lipid modification. The propeptide at 385–387 (SIM) is removed in mature form.

The protein belongs to the paralemmin family. In terms of assembly, interacts with dopamine receptor DRD3. In terms of tissue distribution, widely expressed with highest expression in brain and testis and intermediate expression in heart and adrenal gland.

The protein localises to the cell membrane. The protein resides in the cell projection. Its subcellular location is the filopodium membrane. It localises to the axon. It is found in the dendrite. The protein localises to the dendritic spine. The protein resides in the basolateral cell membrane. Its subcellular location is the apicolateral cell membrane. Its function is as follows. Involved in plasma membrane dynamics and cell process formation. Isoform 1 and isoform 2 are necessary for axonal and dendritic filopodia induction, for dendritic spine maturation and synapse formation in a palmitoylation-dependent manner. The protein is Paralemmin-1 (PALM) of Homo sapiens (Human).